The sequence spans 192 residues: Cytidylate kinase (192 aa).

7–15 lines the ATP pocket; sequence GPPGSGKST.

It belongs to the cytidylate kinase family. Type 2 subfamily.

The protein localises to the cytoplasm. It carries out the reaction CMP + ATP = CDP + ADP. It catalyses the reaction dCMP + ATP = dCDP + ADP. The protein is Cytidylate kinase of Halorubrum lacusprofundi (strain ATCC 49239 / DSM 5036 / JCM 8891 / ACAM 34).